The chain runs to 189 residues: Thymidine kinase (189 aa).

Residues 9 to 16 (GTMNSGKT) and 85 to 88 (DECQ) contribute to the ATP site. Glu-86 (proton acceptor) is an active-site residue. Residues Cys-143, Cys-146, Cys-180, and His-183 each contribute to the Zn(2+) site.

Belongs to the thymidine kinase family. As to quaternary structure, homotetramer.

It localises to the cytoplasm. It catalyses the reaction thymidine + ATP = dTMP + ADP + H(+). In Streptococcus agalactiae serotype Ia (strain ATCC 27591 / A909 / CDC SS700), this protein is Thymidine kinase.